The sequence spans 339 residues: Chromo domain-containing protein cec-3 (339 aa).

Positions 1 to 21 (MSNEGSREESREPEAREGKSD) are disordered. A Chromo domain is found at 24-84 (FEVEKILAHK…KLKVTDKTEL (61 aa)). Residues 91-105 (QIKKNKSQKSKKRSK) are compositionally biased toward basic residues. Disordered regions lie at residues 91-199 (QIKK…APLS) and 215-272 (EEKA…QRTL). 2 stretches are compositionally biased toward basic and acidic residues: residues 106 to 117 (TVSDHESNHDSD) and 171 to 183 (AAME…RNWL). A compositionally biased stretch (acidic residues) spans 184-193 (DEESSDDEAE). A compositionally biased stretch (basic and acidic residues) spans 230 to 241 (KPREVVIKKDPS). A compositionally biased stretch (low complexity) spans 242–251 (ESPVASASSV).

In terms of tissue distribution, expressed in every cell of the embryo (at protein level). In adults, expressed predominantly in the head region and the germline.

The protein localises to the chromosome. It localises to the nucleus. Specifically recognizes and binds methylated 'Lys-9' of histone H3 (H3K9me), with highest preference for trimethylated 'Lys-9' (H3K9me3) followed by dimethylated 'Lys-9' (H3K9me2) followed by monomethylated 'Lys-9' (H3K9me1). Plays a role in maintaining correct unc-4 expression in the VC motor neurons where unc-4 is expressed in the vulval but not in the non-vulval VC neurons. This chain is Chromo domain-containing protein cec-3 (cec-3), found in Caenorhabditis elegans.